Here is a 714-residue protein sequence, read N- to C-terminus: Fatty acid oxidation complex subunit alpha (714 aa).

The segment at 1–190 (MEMTSAFTLN…KLGLVDDVVP (190 aa)) is enoyl-CoA hydratase. Residues 306 to 714 (APLNSVGILG…FWKTTATDLQ (409 aa)) are 3-hydroxyacyl-CoA dehydrogenase.

It in the N-terminal section; belongs to the enoyl-CoA hydratase/isomerase family. In the central section; belongs to the 3-hydroxyacyl-CoA dehydrogenase family. As to quaternary structure, heterotetramer of two alpha chains (FadJ) and two beta chains (FadI).

It is found in the cytoplasm. It catalyses the reaction a (3S)-3-hydroxyacyl-CoA = a (2E)-enoyl-CoA + H2O. The catalysed reaction is a 4-saturated-(3S)-3-hydroxyacyl-CoA = a (3E)-enoyl-CoA + H2O. It carries out the reaction a (3S)-3-hydroxyacyl-CoA + NAD(+) = a 3-oxoacyl-CoA + NADH + H(+). The enzyme catalyses (3S)-3-hydroxybutanoyl-CoA = (3R)-3-hydroxybutanoyl-CoA. It functions in the pathway lipid metabolism; fatty acid beta-oxidation. Its function is as follows. Catalyzes the formation of a hydroxyacyl-CoA by addition of water on enoyl-CoA. Also exhibits 3-hydroxyacyl-CoA epimerase and 3-hydroxyacyl-CoA dehydrogenase activities. The chain is Fatty acid oxidation complex subunit alpha from Escherichia coli O8 (strain IAI1).